The sequence spans 156 residues: Small ribosomal subunit protein uS7 (156 aa).

It belongs to the universal ribosomal protein uS7 family. In terms of assembly, part of the 30S ribosomal subunit. Contacts proteins S9 and S11.

Functionally, one of the primary rRNA binding proteins, it binds directly to 16S rRNA where it nucleates assembly of the head domain of the 30S subunit. Is located at the subunit interface close to the decoding center, probably blocks exit of the E-site tRNA. In Nitrosomonas eutropha (strain DSM 101675 / C91 / Nm57), this protein is Small ribosomal subunit protein uS7.